A 142-amino-acid polypeptide reads, in one-letter code: Hemoglobin subunit alpha-A (142 aa).

One can recognise a Globin domain in the interval 2 to 142; the sequence is VLTAGDKANV…VATALTSKYR (141 aa). The heme b site is built by His-59 and His-88.

The protein belongs to the globin family. Heterotetramer of two alpha-A chains and two beta chains. In terms of tissue distribution, red blood cells.

Its function is as follows. Involved in oxygen transport from the lung to the various peripheral tissues. This Chelonoidis niger (Galapagos giant tortoise) protein is Hemoglobin subunit alpha-A.